Reading from the N-terminus, the 154-residue chain is UPF0756 membrane protein RBAM_026200 (154 aa).

The next 4 helical transmembrane spans lie at 14 to 34 (AIAL…LIVI), 54 to 74 (WGVT…DIGF), 87 to 107 (WIAL…LTLL), and 117 to 137 (LVIG…GPLI).

The protein belongs to the UPF0756 family.

It localises to the cell membrane. This chain is UPF0756 membrane protein RBAM_026200, found in Bacillus velezensis (strain DSM 23117 / BGSC 10A6 / LMG 26770 / FZB42) (Bacillus amyloliquefaciens subsp. plantarum).